The sequence spans 115 residues: Phosphoribosyl-AMP cyclohydrolase (115 aa).

Asp80 provides a ligand contact to Mg(2+). Cys81 contributes to the Zn(2+) binding site. Mg(2+)-binding residues include Asp82 and Asp84. 2 residues coordinate Zn(2+): Cys97 and Cys104.

Belongs to the PRA-CH family. In terms of assembly, homodimer. Mg(2+) is required as a cofactor. The cofactor is Zn(2+).

The protein localises to the cytoplasm. It carries out the reaction 1-(5-phospho-beta-D-ribosyl)-5'-AMP + H2O = 1-(5-phospho-beta-D-ribosyl)-5-[(5-phospho-beta-D-ribosylamino)methylideneamino]imidazole-4-carboxamide. The protein operates within amino-acid biosynthesis; L-histidine biosynthesis; L-histidine from 5-phospho-alpha-D-ribose 1-diphosphate: step 3/9. Its function is as follows. Catalyzes the hydrolysis of the adenine ring of phosphoribosyl-AMP. The protein is Phosphoribosyl-AMP cyclohydrolase of Mycobacterium avium (strain 104).